The sequence spans 424 residues: Glutamate-1-semialdehyde 2,1-aminomutase (424 aa).

K258 is subject to N6-(pyridoxal phosphate)lysine.

Belongs to the class-III pyridoxal-phosphate-dependent aminotransferase family. HemL subfamily. Pyridoxal 5'-phosphate serves as cofactor.

The protein resides in the cytoplasm. The enzyme catalyses (S)-4-amino-5-oxopentanoate = 5-aminolevulinate. It participates in porphyrin-containing compound metabolism; protoporphyrin-IX biosynthesis; 5-aminolevulinate from L-glutamyl-tRNA(Glu): step 2/2. The sequence is that of Glutamate-1-semialdehyde 2,1-aminomutase from Pyrobaculum neutrophilum (strain DSM 2338 / JCM 9278 / NBRC 100436 / V24Sta) (Thermoproteus neutrophilus).